Here is a 324-residue protein sequence, read N- to C-terminus: Beta-ketoacyl-[acyl-carrier-protein] synthase III (324 aa).

Residues cysteine 113 and histidine 251 contribute to the active site. An ACP-binding region spans residues 252 to 256 (QANKR). Asparagine 281 is an active-site residue.

The protein belongs to the thiolase-like superfamily. FabH family. Homodimer.

Its subcellular location is the cytoplasm. It catalyses the reaction malonyl-[ACP] + acetyl-CoA + H(+) = 3-oxobutanoyl-[ACP] + CO2 + CoA. It participates in lipid metabolism; fatty acid biosynthesis. Functionally, catalyzes the condensation reaction of fatty acid synthesis by the addition to an acyl acceptor of two carbons from malonyl-ACP. Catalyzes the first condensation reaction which initiates fatty acid synthesis and may therefore play a role in governing the total rate of fatty acid production. Possesses both acetoacetyl-ACP synthase and acetyl transacylase activities. Its substrate specificity determines the biosynthesis of branched-chain and/or straight-chain of fatty acids. This chain is Beta-ketoacyl-[acyl-carrier-protein] synthase III, found in Bartonella bacilliformis (strain ATCC 35685 / KC583 / Herrer 020/F12,63).